The chain runs to 120 residues: Small ribosomal subunit protein uS19 (120 aa).

Belongs to the universal ribosomal protein uS19 family.

The chain is Small ribosomal subunit protein uS19 (RPS15) from Naegleria gruberi (Amoeba).